The sequence spans 3110 residues: Huntingtin (3110 aa).

Positions 1–58 (MKAFESLKSFQQQQQQQQPPPQPPPPPPPPPQPPQPPPQGQPPPPPPLPGPAEEPLHR) are disordered. K2 bears the N6-acetyllysine mark. Over residues 18 to 52 (QPPPQPPPPPPPPPQPPQPPPQGQPPPPPPLPGPA) the composition is skewed to pro residues. K146 and K204 each carry N6-acetyllysine. 2 HEAT repeats span residues 174–211 (PYLVNLLPCLTRTSKRPEESVQETLAAAVPKIMASFGN) and 216–253 (NEIKVLLKAFIANLKSSSPTVRRTAAGSAVSICQHSRR). K313 carries the post-translational modification N6-acetyllysine. A phosphoserine mark is found at S387, S389, and S402. K412 is modified (N6-acetyllysine). The tract at residues 462–473 (GHDIITEQPRSQ) is interaction with ZDHHC17. A disordered region spans residues 487–549 (DLTSAATDGD…PDSAVTPSDS (63 aa)). Residues 521 to 549 (DGTQASSPISDSSQTTTEGPDSAVTPSDS) show a composition bias toward polar residues. G522 carries the N-myristoyl glycine lipid modification. 2 positions are modified to phosphoserine: S611 and S614. 2 HEAT repeats span residues 773–810 (FSLVDCIPLLQKTLKDESSVTCKLACTAVRHCVLSLCS) and 873–911 (KLQERVLNNVVIYLLGDEDPRVRHVAATTLTRLVPKLFY). Residues 1137–1195 (KAALPSLTNPPSLSPIRRKGKEKEPGEQTSTPMSPKKGGEASTASRQSDTSGPVTASKS) are disordered. Low complexity predominate over residues 1140-1151 (LPSLTNPPSLSP). Phosphoserine; by CDK5 is present on residues S1150 and S1170. Residues 1178-1195 (STASRQSDTSGPVTASKS) show a composition bias toward polar residues. An HEAT 5 repeat occupies 1395–1432 (LFEPLVIKALKQYTTTTSVQLQKQVLDLLAQLVQLRVN). Residue S1845 is modified to Phosphoserine. The Nuclear export signal signature appears at 2363 to 2372 (IVVSLARLPL). The segment at 2601-2628 (EEEWDEEEEEEADAPAPTSPPVSPVNSR) is disordered. Positions 2602 to 2613 (EEWDEEEEEEAD) are enriched in acidic residues.

This sequence belongs to the huntingtin family. In terms of assembly, interacts with PFN1. Interacts through its N-terminus with PRPF40A. Interacts with PQBP1. Interacts with SETD2. Interacts with SH3GLB1. Interacts with SYVN. Interacts with TPR; the interaction is inhibited by forms of Huntingtin with expanded polyglutamine stretch. Interacts with ZDHHC13 (via ANK repeats). Interacts with ZDHHC17 (via ANK repeats). Interacts with F8A1/F8A2/F8A3. Found in a complex with F8A1/F8A2/F8A3, HTT and RAB5A; mediates the recruitment of HTT by RAB5A. Phosphorylation at Ser-1150 and Ser-1170 by CDK5 in response to DNA damage in nuclei of neurons protects neurons against polyglutamine expansion as well as DNA damage mediated toxicity. In terms of processing, cleaved by caspases downstream of the polyglutamine stretch. Post-translationally, myristoylated at Gly-522, following proteolytic cleavage at Asp-521. Expressed to a high degree in all the regions of the brain of adults and in meiotic cells of the testis. In addition, very low levels are detected in various non-neuronal tissues (heart, muscle, liver, lung and kidney).

Its subcellular location is the cytoplasm. The protein localises to the nucleus. The protein resides in the cytoplasmic vesicle. It is found in the autophagosome. In terms of biological role, may play a role in microtubule-mediated transport or vesicle function. Functionally, promotes the formation of autophagic vesicles. The polypeptide is Huntingtin (Htt) (Rattus norvegicus (Rat)).